Reading from the N-terminus, the 139-residue chain is Large ribosomal subunit protein bL17 (139 aa).

The interval 117-139 (DRDPEAKGQDSGPVEIKDESEEG) is disordered.

Belongs to the bacterial ribosomal protein bL17 family. As to quaternary structure, part of the 50S ribosomal subunit. Contacts protein L32.

In Rhodospirillum centenum (strain ATCC 51521 / SW), this protein is Large ribosomal subunit protein bL17.